Reading from the N-terminus, the 351-residue chain is UDP-N-acetylenolpyruvoylglucosamine reductase (351 aa).

One can recognise an FAD-binding PCMH-type domain in the interval 25–196 (HIQAQARWLL…TAVEFRLPLL (172 aa)). Arg173 is an active-site residue. Ser246 (proton donor) is an active-site residue. Residue Glu343 is part of the active site.

The protein belongs to the MurB family. It depends on FAD as a cofactor.

The protein localises to the cytoplasm. The catalysed reaction is UDP-N-acetyl-alpha-D-muramate + NADP(+) = UDP-N-acetyl-3-O-(1-carboxyvinyl)-alpha-D-glucosamine + NADPH + H(+). The protein operates within cell wall biogenesis; peptidoglycan biosynthesis. Cell wall formation. This is UDP-N-acetylenolpyruvoylglucosamine reductase from Xylella fastidiosa (strain M23).